The sequence spans 339 residues: 3,4-dihydroxy-2-butanone 4-phosphate synthase (339 aa).

The segment at 1–206 is DHBP synthase; sequence MKFVSVEQAI…YRLKHESLIK (206 aa). D-ribulose 5-phosphate is bound by residues 27–28, D32, 139–143, and E163; these read RE and RTGHT. E28 lines the Mg(2+) pocket. H142 provides a ligand contact to Mg(2+). Residues 207 to 339 are GTP cyclohydrolase II-like; that stretch reads LEEKSQSVLA…GLNLKACNFN (133 aa).

In the N-terminal section; belongs to the DHBP synthase family. This sequence in the C-terminal section; belongs to the GTP cyclohydrolase II family. Mg(2+) serves as cofactor. It depends on Mn(2+) as a cofactor.

The enzyme catalyses D-ribulose 5-phosphate = (2S)-2-hydroxy-3-oxobutyl phosphate + formate + H(+). Its pathway is cofactor biosynthesis; riboflavin biosynthesis; 2-hydroxy-3-oxobutyl phosphate from D-ribulose 5-phosphate: step 1/1. In terms of biological role, catalyzes the conversion of D-ribulose 5-phosphate to formate and 3,4-dihydroxy-2-butanone 4-phosphate. In Campylobacter jejuni subsp. jejuni serotype O:2 (strain ATCC 700819 / NCTC 11168), this protein is 3,4-dihydroxy-2-butanone 4-phosphate synthase (ribB).